A 118-amino-acid polypeptide reads, in one-letter code: Myotrophin (118 aa).

Cys2 is subject to N-acetylcysteine. Residues 2–30 form an ANK 1 repeat; sequence CDKEFMWALKNGDLDEVKDYVAKGEDVNR. N6-acetyllysine is present on residues Lys4, Lys11, and Lys24. Phosphothreonine is present on Thr31. ANK repeat units lie at residues 34 to 66 and 67 to 99; these read GGRK…APDK and HHIT…VKGP.

The protein belongs to the myotrophin family. In terms of assembly, interacts with the heterodimer formed by CAPZA1 and CAPZB. Interacts with RELA.

It localises to the cytoplasm. The protein localises to the nucleus. The protein resides in the perinuclear region. In terms of biological role, plays a role in the regulation of the growth of actin filaments. Inhibits the activity of the F-actin-capping protein complex formed by the CAPZA1 and CAPZB heterodimer. Promotes dimerization of NF-kappa-B subunits and regulates NF-kappa-B transcription factor activity. Promotes growth of cardiomyocytes, but not cardiomyocyte proliferation. Promotes cardiac muscle hypertrophy. In Rattus norvegicus (Rat), this protein is Myotrophin (Mtpn).